We begin with the raw amino-acid sequence, 147 residues long: MATLLVLHGPNLNLLGTREPGVYGAVTLAQINQDLEQRARAAGHHLLHLQSNAEYELIERIHAARSEGVDFILINPAAFTHTSVALRDALLAVSIPFIEVHLSNVHKREPFRHHSYFSDVAVGVICGLGASGYRLALEAALEQLAAS.

The active-site Proton acceptor is the Y23. Residues N75, H81, and D88 each coordinate substrate. The Proton donor role is filled by H101. Residues 102 to 103 (LS) and R112 contribute to the substrate site.

It belongs to the type-II 3-dehydroquinase family. In terms of assembly, homododecamer.

The catalysed reaction is 3-dehydroquinate = 3-dehydroshikimate + H2O. It functions in the pathway metabolic intermediate biosynthesis; chorismate biosynthesis; chorismate from D-erythrose 4-phosphate and phosphoenolpyruvate: step 3/7. Functionally, catalyzes a trans-dehydration via an enolate intermediate. This Stutzerimonas stutzeri (strain A1501) (Pseudomonas stutzeri) protein is 3-dehydroquinate dehydratase.